Here is a 255-residue protein sequence, read N- to C-terminus: Protein NEN4 (255 aa).

In terms of domain architecture, Exonuclease spans 11–174; the sequence is VFFDLETNVP…DDVRMNLEVL (164 aa). Mg(2+)-binding residues include aspartate 14 and glutamate 16. Residue histidine 161 is the Proton donor/acceptor of the active site. Aspartate 166 is a Mg(2+) binding site.

Mg(2+) serves as cofactor. In terms of tissue distribution, expressed in the sieve elements and phloem pole pericycle cells.

Its subcellular location is the nucleus. In terms of biological role, probable exonuclease required for enuclation of sieve elements. The chain is Protein NEN4 from Arabidopsis thaliana (Mouse-ear cress).